Here is a 180-residue protein sequence, read N- to C-terminus: Interleukin-17B (180 aa).

An N-terminal signal peptide occupies residues 1-20; the sequence is MDWPHNLLFLLTISIFLGLG. A disordered region spans residues 22–44; sequence PRSPKSKRKGQGRPGPLAPGPHQ. An N-linked (GlcNAc...) asparagine glycan is attached at Asn75. 2 disulfides stabilise this stretch: Cys121/Cys176 and Cys126/Cys178.

The protein belongs to the IL-17 family. As to expression, expressed in adult pancreas, small intestine, stomach, spinal cord and testis. Less pronounced expression in prostate, colon mucosal lining, and ovary.

The protein resides in the secreted. Functionally, stimulates the release of tumor necrosis factor alpha and IL-1-beta from the monocytic cell line THP-1. This Homo sapiens (Human) protein is Interleukin-17B (IL17B).